The following is a 211-amino-acid chain: Lysozyme g (211 aa).

The first 26 residues, 1 to 26 (MLGKNDPMCLVLVLLGLTALLGICQG), serve as a signal peptide directing secretion. Cystine bridges form between cysteine 30-cysteine 86 and cysteine 44-cysteine 55. Active-site residues include glutamate 99 and aspartate 112.

This sequence belongs to the glycosyl hydrolase 23 family. Granulocyte compartment of myelomonocytic cells.

The protein localises to the secreted. It catalyses the reaction Hydrolysis of (1-&gt;4)-beta-linkages between N-acetylmuramic acid and N-acetyl-D-glucosamine residues in a peptidoglycan and between N-acetyl-D-glucosamine residues in chitodextrins.. This chain is Lysozyme g, found in Gallus gallus (Chicken).